The sequence spans 326 residues: Lipoyl synthase (326 aa).

[4Fe-4S] cluster contacts are provided by cysteine 68, cysteine 73, cysteine 79, cysteine 94, cysteine 98, cysteine 101, and serine 308. In terms of domain architecture, Radical SAM core spans phenylalanine 80 to serine 297.

This sequence belongs to the radical SAM superfamily. Lipoyl synthase family. The cofactor is [4Fe-4S] cluster.

Its subcellular location is the cytoplasm. It catalyses the reaction [[Fe-S] cluster scaffold protein carrying a second [4Fe-4S](2+) cluster] + N(6)-octanoyl-L-lysyl-[protein] + 2 oxidized [2Fe-2S]-[ferredoxin] + 2 S-adenosyl-L-methionine + 4 H(+) = [[Fe-S] cluster scaffold protein] + N(6)-[(R)-dihydrolipoyl]-L-lysyl-[protein] + 4 Fe(3+) + 2 hydrogen sulfide + 2 5'-deoxyadenosine + 2 L-methionine + 2 reduced [2Fe-2S]-[ferredoxin]. Its pathway is protein modification; protein lipoylation via endogenous pathway; protein N(6)-(lipoyl)lysine from octanoyl-[acyl-carrier-protein]: step 2/2. Catalyzes the radical-mediated insertion of two sulfur atoms into the C-6 and C-8 positions of the octanoyl moiety bound to the lipoyl domains of lipoate-dependent enzymes, thereby converting the octanoylated domains into lipoylated derivatives. The chain is Lipoyl synthase from Aeromonas salmonicida (strain A449).